A 132-amino-acid polypeptide reads, in one-letter code: Large ribosomal subunit protein uL14 (132 aa).

The protein belongs to the universal ribosomal protein uL14 family. In terms of assembly, part of the 50S ribosomal subunit. Forms a cluster with proteins L3 and L24e, part of which may contact the 16S rRNA in 2 intersubunit bridges.

Binds to 23S rRNA. Forms part of two intersubunit bridges in the 70S ribosome. In Methanococcus maripaludis (strain C5 / ATCC BAA-1333), this protein is Large ribosomal subunit protein uL14.